A 274-amino-acid polypeptide reads, in one-letter code: Exosome complex component Rrp42 (274 aa).

Belongs to the RNase PH family. Rrp42 subfamily. Component of the archaeal exosome complex. Forms a hexameric ring-like arrangement composed of 3 Rrp41-Rrp42 heterodimers. The hexameric ring associates with a trimer of Rrp4 and/or Csl4 subunits.

It is found in the cytoplasm. In terms of biological role, non-catalytic component of the exosome, which is a complex involved in RNA degradation. Contributes to the structuring of the Rrp41 active site. The protein is Exosome complex component Rrp42 of Pyrobaculum aerophilum (strain ATCC 51768 / DSM 7523 / JCM 9630 / CIP 104966 / NBRC 100827 / IM2).